Here is an 86-residue protein sequence, read N- to C-terminus: Exodeoxyribonuclease 7 small subunit (86 aa).

The disordered stretch occupies residues 67–86 (RVSPASGGATEAPAPAERDR).

Belongs to the XseB family. Heterooligomer composed of large and small subunits.

The protein resides in the cytoplasm. It carries out the reaction Exonucleolytic cleavage in either 5'- to 3'- or 3'- to 5'-direction to yield nucleoside 5'-phosphates.. In terms of biological role, bidirectionally degrades single-stranded DNA into large acid-insoluble oligonucleotides, which are then degraded further into small acid-soluble oligonucleotides. In Beutenbergia cavernae (strain ATCC BAA-8 / DSM 12333 / CCUG 43141 / JCM 11478 / NBRC 16432 / NCIMB 13614 / HKI 0122), this protein is Exodeoxyribonuclease 7 small subunit.